A 184-amino-acid polypeptide reads, in one-letter code: Peptide deformylase (184 aa).

Residues Cys111 and His154 each coordinate Fe cation. Glu155 is a catalytic residue. Position 158 (His158) interacts with Fe cation.

The protein belongs to the polypeptide deformylase family. It depends on Fe(2+) as a cofactor.

It carries out the reaction N-terminal N-formyl-L-methionyl-[peptide] + H2O = N-terminal L-methionyl-[peptide] + formate. In terms of biological role, removes the formyl group from the N-terminal Met of newly synthesized proteins. Requires at least a dipeptide for an efficient rate of reaction. N-terminal L-methionine is a prerequisite for activity but the enzyme has broad specificity at other positions. The sequence is that of Peptide deformylase from Lactobacillus delbrueckii subsp. bulgaricus (strain ATCC 11842 / DSM 20081 / BCRC 10696 / JCM 1002 / NBRC 13953 / NCIMB 11778 / NCTC 12712 / WDCM 00102 / Lb 14).